The chain runs to 257 residues: Deoxyribose-phosphate aldolase (257 aa).

The active-site Proton donor/acceptor is the D102. Catalysis depends on K165, which acts as the Schiff-base intermediate with acetaldehyde. The active-site Proton donor/acceptor is K199.

The protein belongs to the DeoC/FbaB aldolase family. DeoC type 2 subfamily.

Its subcellular location is the cytoplasm. The catalysed reaction is 2-deoxy-D-ribose 5-phosphate = D-glyceraldehyde 3-phosphate + acetaldehyde. The protein operates within carbohydrate degradation; 2-deoxy-D-ribose 1-phosphate degradation; D-glyceraldehyde 3-phosphate and acetaldehyde from 2-deoxy-alpha-D-ribose 1-phosphate: step 2/2. In terms of biological role, catalyzes a reversible aldol reaction between acetaldehyde and D-glyceraldehyde 3-phosphate to generate 2-deoxy-D-ribose 5-phosphate. In Photobacterium profundum (strain SS9), this protein is Deoxyribose-phosphate aldolase.